We begin with the raw amino-acid sequence, 70 residues long: Large ribosomal subunit protein bL31 (70 aa).

Zn(2+) is bound by residues cysteine 16, cysteine 18, cysteine 37, and cysteine 40.

This sequence belongs to the bacterial ribosomal protein bL31 family. Type A subfamily. In terms of assembly, part of the 50S ribosomal subunit. The cofactor is Zn(2+).

Its function is as follows. Binds the 23S rRNA. The sequence is that of Large ribosomal subunit protein bL31 from Desulfovibrio desulfuricans (strain ATCC 27774 / DSM 6949 / MB).